Reading from the N-terminus, the 1118-residue chain is Protein translocase subunit SecA (1118 aa).

Residues Gln-176, 194 to 198, and Asp-693 contribute to the ATP site; that span reads GEGKT. Positions 1034-1056 are disordered; that stretch reads QQPVQQPKYRETKDEAGSAFGGG.

The protein belongs to the SecA family. In terms of assembly, monomer and homodimer. Part of the essential Sec protein translocation apparatus which comprises SecA, SecYEG and auxiliary proteins SecDF. Other proteins may also be involved.

It is found in the cell inner membrane. Its subcellular location is the cytoplasm. The catalysed reaction is ATP + H2O + cellular proteinSide 1 = ADP + phosphate + cellular proteinSide 2.. Part of the Sec protein translocase complex. Interacts with the SecYEG preprotein conducting channel. Has a central role in coupling the hydrolysis of ATP to the transfer of proteins into and across the cell membrane, serving as an ATP-driven molecular motor driving the stepwise translocation of polypeptide chains across the membrane. This Cytophaga hutchinsonii (strain ATCC 33406 / DSM 1761 / CIP 103989 / NBRC 15051 / NCIMB 9469 / D465) protein is Protein translocase subunit SecA.